Reading from the N-terminus, the 126-residue chain is Chorion class B protein M1768 (126 aa).

Residues 1-17 (YGGLGYGGLGGGCGRGF) are left arm. The interval 18 to 86 (SGGGLPVATA…GNGAVGITRE (69 aa)) is central domain. Residues 87–126 (GGFGYGAGYGDGYGLGFGGYGGGYGLGYGGYGGCGCSWGY) form a right arm (Gly-rich tandem repeats) region.

It belongs to the chorion protein family.

This protein is one of many from the eggshell of the silk moth. In Bombyx mori (Silk moth), this protein is Chorion class B protein M1768.